Reading from the N-terminus, the 245-residue chain is 8-amino-3,8-dideoxy-manno-octulosonate cytidylyltransferase (245 aa).

It belongs to the KdsB family.

The protein localises to the cytoplasm. The catalysed reaction is 8-amino-3,8-dideoxy-alpha-D-manno-octulosonate + CTP = CMP-8-amino-3,8-dideoxy-alpha-D-manno-oct-2-ulosonate + diphosphate. It functions in the pathway bacterial outer membrane biogenesis; lipopolysaccharide biosynthesis. Activates KDO8N (a required 8-carbon sugar) for incorporation into bacterial lipopolysaccharide in the Shewanella genus. This Shewanella halifaxensis (strain HAW-EB4) protein is 8-amino-3,8-dideoxy-manno-octulosonate cytidylyltransferase.